A 420-amino-acid chain; its full sequence is Cysteate-C-fatty acyltransferase (420 aa).

Pyridoxal 5'-phosphate contacts are provided by residues 114 to 115 (GY), H219, T247, and A249. K250 is modified (N6-(pyridoxal phosphate)lysine).

It belongs to the class-II pyridoxal-phosphate-dependent aminotransferase family. Pyridoxal 5'-phosphate is required as a cofactor.

It carries out the reaction isopentadecanoyl-CoA + L-cysteate + H(+) = 3-oxocapnine + CO2 + CoA. The protein operates within lipid metabolism. In terms of biological role, transferase involved in the biosynthesis of capnine, a sulfonolipid present in the outer membrane of gliding Bacteroidetes and essential for gliding motility. Catalyzes the formation of 3-dehydrocapnine from cysteate and isopentadecanoyl-CoA (13-methyl-myristoyl-CoA). In vitro, products are also detected when 13-methyl-myristic acid is substituted with tridecylic acid, myristic acid, pentadecanoic acid or palmitic acid. This Capnocytophaga ochracea (strain ATCC 27872 / DSM 7271 / CCUG 9716 / JCM 12966 / NCTC 12371 / SS31 / VPI 2845) (Bacteroides ochraceus) protein is Cysteate-C-fatty acyltransferase.